Consider the following 307-residue polypeptide: Mycothiol acetyltransferase (307 aa).

N-acetyltransferase domains are found at residues histidine 15–proline 158 and valine 164–serine 307. Glutamate 46 is a binding site for 1D-myo-inositol 2-(L-cysteinylamino)-2-deoxy-alpha-D-glucopyranoside. Leucine 90–valine 92 lines the acetyl-CoA pocket. 3 residues coordinate 1D-myo-inositol 2-(L-cysteinylamino)-2-deoxy-alpha-D-glucopyranoside: glutamate 191, lysine 230, and glutamate 239. Acetyl-CoA contacts are provided by residues valine 243 to valine 245 and glutamine 250 to lysine 256. 1D-myo-inositol 2-(L-cysteinylamino)-2-deoxy-alpha-D-glucopyranoside is bound at residue tyrosine 277.

Belongs to the acetyltransferase family. MshD subfamily. In terms of assembly, monomer.

The catalysed reaction is 1D-myo-inositol 2-(L-cysteinylamino)-2-deoxy-alpha-D-glucopyranoside + acetyl-CoA = mycothiol + CoA + H(+). In terms of biological role, catalyzes the transfer of acetyl from acetyl-CoA to desacetylmycothiol (Cys-GlcN-Ins) to form mycothiol. The chain is Mycothiol acetyltransferase from Streptomyces griseus subsp. griseus (strain JCM 4626 / CBS 651.72 / NBRC 13350 / KCC S-0626 / ISP 5235).